A 140-amino-acid chain; its full sequence is Small ribosomal subunit protein uS12 (140 aa).

Asp102 is modified (3-methylthioaspartic acid).

This sequence belongs to the universal ribosomal protein uS12 family. Part of the 30S ribosomal subunit. Contacts proteins S8 and S17. May interact with IF1 in the 30S initiation complex.

Its function is as follows. With S4 and S5 plays an important role in translational accuracy. Functionally, interacts with and stabilizes bases of the 16S rRNA that are involved in tRNA selection in the A site and with the mRNA backbone. Located at the interface of the 30S and 50S subunits, it traverses the body of the 30S subunit contacting proteins on the other side and probably holding the rRNA structure together. The combined cluster of proteins S8, S12 and S17 appears to hold together the shoulder and platform of the 30S subunit. The sequence is that of Small ribosomal subunit protein uS12 from Bacillus cereus (strain G9842).